A 221-amino-acid polypeptide reads, in one-letter code: MRTVYHQRLTELAGRLGEMCSLAGIAMKRATQALLEADIGAAEQVIRDHERIVAMRAQVEKEAFALLALQHPVAGELREIFSAVQIIADTERMGALAVHIAKITRREYPNQVLPEEVRNCFADMAKVAIALGDSARQVLVNRDPQEAAQLHDRDDAMDDLHRHLLSVLIDREWRHGVRVGVETALLGRFFERFADHAVEVGRRVIFMVTGVLPTEDEISTY.

It belongs to the PhoU family. In terms of assembly, homodimer.

The protein resides in the cytoplasm. In terms of biological role, plays a role in the regulation of phosphate uptake. In this role, it may bind, possibly as a chaperone, to PhoR, PhoP or a PhoR-PhoP complex to promote dephosphorylation of phospho-PhoP, or inhibit formation of the PhoR-PhoP transitory complex. This Mycobacterium bovis (strain ATCC BAA-935 / AF2122/97) protein is Phosphate-specific transport system accessory protein PhoU homolog 1 (phoU1).